Reading from the N-terminus, the 153-residue chain is MVVKAVCVINGDVKGTVHFEQQDAKSPVLVTGEVNGLAKGLHGFHVHEFGDNTNGCTSAGPHFNPYGNSHGAPSDLNRHLGDLGNIEASGDGATKVEISDKLITLFGENSIVGRTIVVHADPDDLGKGGHELSKTTGNAGARLGCGVIGICKI.

3 residues coordinate Cu cation: His-45, His-47, and His-62. A disulfide bond links Cys-56 and Cys-145. Zn(2+) contacts are provided by His-62, His-70, His-79, and Asp-82. Position 119 (His-119) interacts with Cu cation.

It belongs to the Cu-Zn superoxide dismutase family. In terms of assembly, homodimer. It depends on Cu cation as a cofactor. Zn(2+) serves as cofactor.

The protein resides in the cytoplasm. It carries out the reaction 2 superoxide + 2 H(+) = H2O2 + O2. Functionally, destroys radicals which are normally produced within the cells and which are toxic to biological systems. The polypeptide is Superoxide dismutase [Cu-Zn] (Ceratitis capitata (Mediterranean fruit fly)).